A 534-amino-acid chain; its full sequence is Phosphoenolpyruvate carboxykinase (ATP) (534 aa).

Substrate is bound by residues Arg59, Tyr200, and Lys206. ATP contacts are provided by residues Lys206, His225, and 242 to 250; that span reads GLSGTGKTT. Mn(2+) is bound by residues Lys206 and His225. Asp263 lines the Mn(2+) pocket. Residues Glu291, Arg327, 443 to 444, and Thr449 contribute to the ATP site; that span reads RI. A substrate-binding site is contributed by Arg327.

It belongs to the phosphoenolpyruvate carboxykinase (ATP) family. Mn(2+) is required as a cofactor.

Its subcellular location is the cytoplasm. It catalyses the reaction oxaloacetate + ATP = phosphoenolpyruvate + ADP + CO2. It functions in the pathway carbohydrate biosynthesis; gluconeogenesis. Its function is as follows. Involved in the gluconeogenesis. Catalyzes the conversion of oxaloacetate (OAA) to phosphoenolpyruvate (PEP) through direct phosphoryl transfer between the nucleoside triphosphate and OAA. The polypeptide is Phosphoenolpyruvate carboxykinase (ATP) (Agathobacter rectalis (strain ATCC 33656 / DSM 3377 / JCM 17463 / KCTC 5835 / VPI 0990) (Eubacterium rectale)).